The primary structure comprises 249 residues: Triosephosphate isomerase (249 aa).

Residue 9–11 coordinates substrate; sequence NWK. The Electrophile role is filled by histidine 95. Glutamate 165 acts as the Proton acceptor in catalysis. Substrate is bound by residues glycine 171, serine 211, and 232–233; that span reads GG.

Belongs to the triosephosphate isomerase family. In terms of assembly, homodimer.

It localises to the cytoplasm. It carries out the reaction D-glyceraldehyde 3-phosphate = dihydroxyacetone phosphate. The protein operates within carbohydrate biosynthesis; gluconeogenesis. It functions in the pathway carbohydrate degradation; glycolysis; D-glyceraldehyde 3-phosphate from glycerone phosphate: step 1/1. In terms of biological role, involved in the gluconeogenesis. Catalyzes stereospecifically the conversion of dihydroxyacetone phosphate (DHAP) to D-glyceraldehyde-3-phosphate (G3P). This is Triosephosphate isomerase from Chlorobium phaeobacteroides (strain DSM 266 / SMG 266 / 2430).